The chain runs to 109 residues: FK506-binding protein (109 aa).

Residues 20–108 (GKEITVHYTG…IFEVELLKVY (89 aa)) enclose the PPIase FKBP-type domain.

It belongs to the FKBP-type PPIase family.

The catalysed reaction is [protein]-peptidylproline (omega=180) = [protein]-peptidylproline (omega=0). Its activity is regulated as follows. Inhibited by FK506. Functionally, PPIases accelerate the folding of proteins. The polypeptide is FK506-binding protein (fbp) (Neisseria meningitidis serogroup B (strain ATCC BAA-335 / MC58)).